A 251-amino-acid polypeptide reads, in one-letter code: CDP-diacylglycerol pyrophosphatase (251 aa).

The chain crosses the membrane as a helical span at residues 5–25 (GYFLLAVIVIVAAAGVGYWKF).

Belongs to the Cdh family.

It is found in the cell inner membrane. The catalysed reaction is a CDP-1,2-diacyl-sn-glycerol + H2O = a 1,2-diacyl-sn-glycero-3-phosphate + CMP + 2 H(+). It participates in phospholipid metabolism; CDP-diacylglycerol degradation; phosphatidate from CDP-diacylglycerol: step 1/1. The chain is CDP-diacylglycerol pyrophosphatase from Salmonella paratyphi A (strain ATCC 9150 / SARB42).